The sequence spans 197 residues: Small ribosomal subunit protein uS4 (197 aa).

The 61-residue stretch at serine 87 to lysine 147 folds into the S4 RNA-binding domain.

This sequence belongs to the universal ribosomal protein uS4 family. Part of the 30S ribosomal subunit. Contacts protein S5. The interaction surface between S4 and S5 is involved in control of translational fidelity.

Functionally, one of the primary rRNA binding proteins, it binds directly to 16S rRNA where it nucleates assembly of the body of the 30S subunit. With S5 and S12 plays an important role in translational accuracy. The polypeptide is Small ribosomal subunit protein uS4 (Agathobacter rectalis (strain ATCC 33656 / DSM 3377 / JCM 17463 / KCTC 5835 / VPI 0990) (Eubacterium rectale)).